The primary structure comprises 739 residues: Interleukin-17 receptor D (739 aa).

The signal sequence occupies residues 1–16; the sequence is MAPWLQLCSVFFTVNA. The Extracellular segment spans residues 17 to 299; it reads CLNGSQLAVA…VHSPWAGPIR (283 aa). Asparagine 19, asparagine 55, asparagine 62, asparagine 80, asparagine 137, asparagine 171, asparagine 206, and asparagine 277 each carry an N-linked (GlcNAc...) asparagine glycan. Residues 300–320 form a helical membrane-spanning segment; the sequence is AVAITVPLVVISAFATLFTVM. Residues 321-739 are Cytoplasmic-facing; it reads CRKKQQENIY…TDELHAVAPL (419 aa). The region spanning 355–509 is the SEFIR domain; the sequence is RPKVFLCYSS…LMDNLPQLCS (155 aa). Disordered regions lie at residues 614-635 and 650-719; these read GPAD…EARP and VKAG…SSGS. Over residues 667–702 the composition is skewed to low complexity; the sequence is SSVPSSELSLPLMEGLSTDQTETSSLTESVSSSSGL.

As to quaternary structure, interacts with MAP3K7. Self-associates. Interacts with FGFR1, FGFR2 and phosphorylated MAP2K1 or MAP2K2. Associates with a MAP2K1/2-MAPK1/3 complex. In terms of tissue distribution, expressed in umbilical vein endothelial cells and in several highly vascularized tissues such as kidney, colon, skeletal muscle, heart and small intestine. Highly expressed in ductal epithelial cells of salivary glands, seminal vesicles and the collecting tubules of the kidney. Isoform 1 is also highly expressed in both fetal and adult brain, pituitary, tonsils, spleen, adenoids, fetal kidney, liver, testes and ovary. Isoform 1 is also expressed at moderate levels in primary aortic endothelial cells and adrenal medulla, and at low levels in adrenal cortex. Isoform 4 is specifically and highly expressed in pituitary, fetal brain and umbilical vein endothelial cells.

Its subcellular location is the golgi apparatus membrane. The protein localises to the cell membrane. The protein resides in the cytoplasm. Its function is as follows. Feedback inhibitor of fibroblast growth factor mediated Ras-MAPK signaling and ERK activation. Regulates the nuclear ERK signaling pathway by spatially blocking nuclear translocation of activated ERK without inhibiting cytoplasmic phosphorylation of ERK. Mediates JNK activation and may be involved in apoptosis. May inhibit FGF-induced FGFR1 tyrosine phosphorylation. Might have a role in the early stages of fate specification of GnRH-secreting neurons. Inhibits TGFB-induced epithelial-to-mesenchymal transition in lens epithelial cells. The sequence is that of Interleukin-17 receptor D (IL17RD) from Homo sapiens (Human).